We begin with the raw amino-acid sequence, 360 residues long: DNA integrity scanning protein DisA (360 aa).

The region spanning 9–147 is the DAC domain; that stretch reads DDEIIEVLRM…GSRKYILRET (139 aa). ATP contacts are provided by residues Gly-76, Leu-94, and 107 to 111; that span reads TRHKT.

Belongs to the DisA family. As to quaternary structure, homooctamer. Mg(2+) is required as a cofactor.

The catalysed reaction is 2 ATP = 3',3'-c-di-AMP + 2 diphosphate. Its function is as follows. Participates in a DNA-damage check-point that is active prior to asymmetric division when DNA is damaged. DisA forms globular foci that rapidly scan along the chromosomes during sporulation, searching for lesions. When a lesion is present, DisA pauses at the lesion site. This triggers a cellular response that culminates in a temporary block in sporulation initiation. Functionally, also has diadenylate cyclase activity, catalyzing the condensation of 2 ATP molecules into cyclic di-AMP (c-di-AMP). c-di-AMP acts as a signaling molecule that couples DNA integrity with progression of sporulation. The rise in c-di-AMP level generated by DisA while scanning the chromosome, operates as a positive signal that advances sporulation; upon encountering a lesion, the DisA focus arrests at the damaged site and halts c-di-AMP synthesis. The sequence is that of DNA integrity scanning protein DisA from Acetivibrio thermocellus (strain ATCC 27405 / DSM 1237 / JCM 9322 / NBRC 103400 / NCIMB 10682 / NRRL B-4536 / VPI 7372) (Clostridium thermocellum).